We begin with the raw amino-acid sequence, 320 residues long: E3 ubiquitin-protein ligase RZF1 (320 aa).

Residue serine 2 is modified to N-acetylserine. The RING-type; atypical zinc finger occupies 186-227 (CPVCKDEFELKSEAKQMPCHHIYHSDCIVPWLVQHNSCPVCR). The segment at 229-320 (ELPSRGSSSS…MGYSGWPFDY (92 aa)) is disordered. Composition is skewed to low complexity over residues 232–249 (SRGS…STNG) and 295–308 (QQQQ…QQQQ).

In terms of tissue distribution, expressed in seedlings and in flowers.

It catalyses the reaction S-ubiquitinyl-[E2 ubiquitin-conjugating enzyme]-L-cysteine + [acceptor protein]-L-lysine = [E2 ubiquitin-conjugating enzyme]-L-cysteine + N(6)-ubiquitinyl-[acceptor protein]-L-lysine.. In terms of biological role, E3 ubiquitin-protein ligase that promotes osmotic stress and abscisic acid (ABA) responses. Negatively regulates drought-mediated control of early seedling development, probably by influencing proline content, water loss, membrane ion leakage and the expression of dehydration stress-related genes (e.g. RAB18, RD29A, RD29B, AOX1A, ERD15, ERD1, COR15A, P5CS1 and P5CR). Modulates bZIP11 accumulation during rehydration following drought. The chain is E3 ubiquitin-protein ligase RZF1 from Arabidopsis thaliana (Mouse-ear cress).